Reading from the N-terminus, the 237-residue chain is Ribonuclease 3 (237 aa).

An RNase III domain is found at 4–133 (LTELENSLGV…VLAAIYIDKG (130 aa)). E46 is a binding site for Mg(2+). Active-site residues include D50 and E122. E122 contributes to the Mg(2+) binding site. Residues 160 to 229 (DYKSRLQELI…AKVALQQFEN (70 aa)) enclose the DRBM domain.

It belongs to the ribonuclease III family. Homodimer. The cofactor is Mg(2+).

Its subcellular location is the cytoplasm. It carries out the reaction Endonucleolytic cleavage to 5'-phosphomonoester.. In terms of biological role, digests double-stranded RNA. Involved in the processing of primary rRNA transcript to yield the immediate precursors to the large and small rRNAs (23S and 16S). Processes some mRNAs, and tRNAs when they are encoded in the rRNA operon. Processes pre-crRNA and tracrRNA of type II CRISPR loci if present in the organism. This Dehalococcoides mccartyi (strain CBDB1) protein is Ribonuclease 3.